A 323-amino-acid polypeptide reads, in one-letter code: tRNA dimethylallyltransferase (323 aa).

32–39 (GPTASGKS) contributes to the ATP binding site. 34–39 (TASGKS) provides a ligand contact to substrate. The segment at 57–60 (DSMQ) is interaction with substrate tRNA.

The protein belongs to the IPP transferase family. Monomer. Mg(2+) serves as cofactor.

It catalyses the reaction adenosine(37) in tRNA + dimethylallyl diphosphate = N(6)-dimethylallyladenosine(37) in tRNA + diphosphate. Catalyzes the transfer of a dimethylallyl group onto the adenine at position 37 in tRNAs that read codons beginning with uridine, leading to the formation of N6-(dimethylallyl)adenosine (i(6)A). The polypeptide is tRNA dimethylallyltransferase (Rhodopseudomonas palustris (strain BisB5)).